We begin with the raw amino-acid sequence, 99 residues long: Cell division protein FtsB (99 aa).

The Cytoplasmic segment spans residues 1–3 (MKF). Residues 4–21 (FVIALIVLLGLLQYRLWS) form a helical membrane-spanning segment. The Periplasmic segment spans residues 22 to 99 (GSNSLPEYFV…GERSVSSPSQ (78 aa)). Residues 36–73 (IAVQQEGNDKLNERNQVLKEEIIDLKSGTEAIEERARN) are a coiled coil.

It belongs to the FtsB family. In terms of assembly, part of a complex composed of FtsB, FtsL and FtsQ.

It is found in the cell inner membrane. Its function is as follows. Essential cell division protein. May link together the upstream cell division proteins, which are predominantly cytoplasmic, with the downstream cell division proteins, which are predominantly periplasmic. The chain is Cell division protein FtsB from Shewanella sp. (strain W3-18-1).